Consider the following 239-residue polypeptide: MPASWPPRTVIRKASGLRTLESALYRNGLGPVAGVDEVGRGACAGPLVVAACVLGPNRLESLAALDDSKKLGEKERERLFPVIRRYALAYHVVFIPSGEVDRRGVHVANIEGMRRAVAGLSVRPGYVLSDGFRVPGLPMPSLPVVGGDAAAACIAAASVLAKVSRDRLMVAMEREHPGYGFAEHKGYSTPAHTAALAELGPCAQHRYSFINVRRLVTAGTPQISGGLTDAEPGQCCELG.

The RNase H type-2 domain maps to 30–221; that stretch reads GPVAGVDEVG…VRRLVTAGTP (192 aa). 3 residues coordinate a divalent metal cation: Asp-36, Glu-37, and Asp-130.

It belongs to the RNase HII family. Requires Mn(2+) as cofactor. Mg(2+) is required as a cofactor.

It localises to the cytoplasm. It carries out the reaction Endonucleolytic cleavage to 5'-phosphomonoester.. In terms of biological role, endonuclease that specifically degrades the RNA of RNA-DNA hybrids. In Mycobacterium sp. (strain JLS), this protein is Ribonuclease HII.